Here is a 908-residue protein sequence, read N- to C-terminus: Protein translocase subunit SecA (908 aa).

ATP-binding positions include Gln87, Gly105–Thr109, and Asp507. A disordered region spans residues Glu860 to Lys898. Positions 892, 894, 903, and 904 each coordinate Zn(2+).

Belongs to the SecA family. As to quaternary structure, monomer and homodimer. Part of the essential Sec protein translocation apparatus which comprises SecA, SecYEG and auxiliary proteins SecDF-YajC and YidC. Zn(2+) is required as a cofactor.

Its subcellular location is the cell inner membrane. It localises to the cytoplasm. The catalysed reaction is ATP + H2O + cellular proteinSide 1 = ADP + phosphate + cellular proteinSide 2.. Part of the Sec protein translocase complex. Interacts with the SecYEG preprotein conducting channel. Has a central role in coupling the hydrolysis of ATP to the transfer of proteins into and across the cell membrane, serving both as a receptor for the preprotein-SecB complex and as an ATP-driven molecular motor driving the stepwise translocation of polypeptide chains across the membrane. The protein is Protein translocase subunit SecA of Methylobacillus flagellatus (strain ATCC 51484 / DSM 6875 / VKM B-1610 / KT).